The primary structure comprises 198 residues: Glycerol-3-phosphate acyltransferase (198 aa).

5 helical membrane passes run 2–22, 53–73, 79–99, 113–133, and 152–172; these read IIDLIWIITSYVIGSIPFGVL, LGFITLFFDVLKGFFPVVIAT, PFMYTMTGLAAIIGHLYSCFL, VLIPIAFWQLLFAAILCTFFI, and IILFITGKFAYIPLSLIIMAL.

This sequence belongs to the PlsY family. As to quaternary structure, probably interacts with PlsX.

It is found in the cell membrane. It catalyses the reaction an acyl phosphate + sn-glycerol 3-phosphate = a 1-acyl-sn-glycero-3-phosphate + phosphate. Its pathway is lipid metabolism; phospholipid metabolism. Catalyzes the transfer of an acyl group from acyl-phosphate (acyl-PO(4)) to glycerol-3-phosphate (G3P) to form lysophosphatidic acid (LPA). This enzyme utilizes acyl-phosphate as fatty acyl donor, but not acyl-CoA or acyl-ACP. This is Glycerol-3-phosphate acyltransferase from Lawsonia intracellularis (strain PHE/MN1-00).